Consider the following 340-residue polypeptide: DNA-directed RNA polymerase subunit alpha (340 aa).

Residues 1–236 form an alpha N-terminal domain (alpha-NTD) region; that stretch reads MLSLSKNWNT…EQLQLFISFE (236 aa). Positions 251–340 are alpha C-terminal domain (alpha-CTD); that stretch reads FSPYLLKRVD…LSKRYEDSYN (90 aa).

This sequence belongs to the RNA polymerase alpha chain family. As to quaternary structure, homodimer. The RNAP catalytic core consists of 2 alpha, 1 beta, 1 beta' and 1 omega subunit. When a sigma factor is associated with the core the holoenzyme is formed, which can initiate transcription.

It carries out the reaction RNA(n) + a ribonucleoside 5'-triphosphate = RNA(n+1) + diphosphate. DNA-dependent RNA polymerase catalyzes the transcription of DNA into RNA using the four ribonucleoside triphosphates as substrates. The protein is DNA-directed RNA polymerase subunit alpha of Rickettsia africae (strain ESF-5).